Reading from the N-terminus, the 285-residue chain is Elongation factor Ts (285 aa).

The tract at residues 84-87 (TDFV) is involved in Mg(2+) ion dislocation from EF-Tu.

This sequence belongs to the EF-Ts family.

It is found in the cytoplasm. Its function is as follows. Associates with the EF-Tu.GDP complex and induces the exchange of GDP to GTP. It remains bound to the aminoacyl-tRNA.EF-Tu.GTP complex up to the GTP hydrolysis stage on the ribosome. The chain is Elongation factor Ts from Bifidobacterium animalis subsp. lactis (strain AD011).